The chain runs to 408 residues: Dual-specificity RNA methyltransferase RlmN (408 aa).

Glu-120 serves as the catalytic Proton acceptor. Residues 126–375 (EEGRGTLCIS…IRTPRGRDIL (250 aa)) enclose the Radical SAM core domain. Cys-133 and Cys-378 are joined by a disulfide. [4Fe-4S] cluster is bound by residues Cys-140, Cys-144, and Cys-147. Residues 204 to 205 (GE), Ser-236, 258 to 260 (SLH), and Asn-335 contribute to the S-adenosyl-L-methionine site. Catalysis depends on Cys-378, which acts as the S-methylcysteine intermediate.

This sequence belongs to the radical SAM superfamily. RlmN family. Requires [4Fe-4S] cluster as cofactor.

The protein localises to the cytoplasm. The catalysed reaction is adenosine(2503) in 23S rRNA + 2 reduced [2Fe-2S]-[ferredoxin] + 2 S-adenosyl-L-methionine = 2-methyladenosine(2503) in 23S rRNA + 5'-deoxyadenosine + L-methionine + 2 oxidized [2Fe-2S]-[ferredoxin] + S-adenosyl-L-homocysteine. The enzyme catalyses adenosine(37) in tRNA + 2 reduced [2Fe-2S]-[ferredoxin] + 2 S-adenosyl-L-methionine = 2-methyladenosine(37) in tRNA + 5'-deoxyadenosine + L-methionine + 2 oxidized [2Fe-2S]-[ferredoxin] + S-adenosyl-L-homocysteine. In terms of biological role, specifically methylates position 2 of adenine 2503 in 23S rRNA and position 2 of adenine 37 in tRNAs. m2A2503 modification seems to play a crucial role in the proofreading step occurring at the peptidyl transferase center and thus would serve to optimize ribosomal fidelity. The sequence is that of Dual-specificity RNA methyltransferase RlmN from Rhizobium johnstonii (strain DSM 114642 / LMG 32736 / 3841) (Rhizobium leguminosarum bv. viciae).